The primary structure comprises 71 residues: Small ribosomal subunit protein bS21 (71 aa).

Residues 50–59 are compositionally biased toward basic residues; it reads AAAVKRHAKK. Positions 50–71 are disordered; sequence AAAVKRHAKKVQREQRRAVRLY. Over residues 60–71 the composition is skewed to basic and acidic residues; it reads VQREQRRAVRLY.

This sequence belongs to the bacterial ribosomal protein bS21 family.

This Pseudomonas fluorescens (strain ATCC BAA-477 / NRRL B-23932 / Pf-5) protein is Small ribosomal subunit protein bS21.